The primary structure comprises 140 residues: Trafficking protein particle complex subunit 2-like protein (140 aa).

It belongs to the TRAPP small subunits family. Sedlin subfamily.

The sequence is that of Trafficking protein particle complex subunit 2-like protein (trappc2l) from Dictyostelium discoideum (Social amoeba).